Here is a 349-residue protein sequence, read N- to C-terminus: MAVAVPPGRAAGSGWAWRPVARDALLARAFHSCTELRGRFYLVGGLLAGGAREPSSDTVVFDPARGQAVRLGARGSPPRSHHDAAPVDGRWLCVVGGWDGSRRLATVTALDTERGVWEAWTGTPGDCPPAGLSSHTCTRISDRELQVAGREGGIHTQRRYGSIYTLRLDPSARTYCYKQEGCHTASRSGHCAALLQTPGPHPGHQLLLFGGCNLAEPEVAGHWSHGKIKEEPPVAPHLMEQLARLVSSGQGSQKGPHGLRHHSCSVVGPFAVLFGGETLTRARDTICNDLYIYDTRTSPPLWFHFPCADRGMKRMGHRTCLWNDQLYLVGGFGEDGRTASPQVCILDFI.

Kelch repeat units follow at residues 39 to 89, 91 to 137, and 325 to 349; these read RFYL…PVDG, WLCV…SHTC, and QLYL…LDFI.

As to quaternary structure, interacts with CCNA1.

The polypeptide is Kelch domain-containing protein 9 (KLHDC9) (Homo sapiens (Human)).